A 165-amino-acid polypeptide reads, in one-letter code: Histone H1-like protein HC2 (165 aa).

Basic residues-rich tracts occupy residues 1–50 (MLGV…KTVA) and 59–80 (PVAKKATAKKAPVRKVAAKKTV). Positions 1 to 80 (MLGVQKKRST…VRKVAAKKTV (80 aa)) are disordered.

Belongs to the histone H1/H5 family. HCT subfamily.

In terms of biological role, might have a role in establishing the nucleoid structure of elementary bodies. The polypeptide is Histone H1-like protein HC2 (hctB) (Chlamydia trachomatis).